A 520-amino-acid polypeptide reads, in one-letter code: Bifunctional purine biosynthesis protein PurH (520 aa).

One can recognise an MGS-like domain in the interval 1 to 147 (MAKIGRALIS…KNNRDVTVVV (147 aa)).

It belongs to the PurH family.

It carries out the reaction (6R)-10-formyltetrahydrofolate + 5-amino-1-(5-phospho-beta-D-ribosyl)imidazole-4-carboxamide = 5-formamido-1-(5-phospho-D-ribosyl)imidazole-4-carboxamide + (6S)-5,6,7,8-tetrahydrofolate. The enzyme catalyses IMP + H2O = 5-formamido-1-(5-phospho-D-ribosyl)imidazole-4-carboxamide. The protein operates within purine metabolism; IMP biosynthesis via de novo pathway; 5-formamido-1-(5-phospho-D-ribosyl)imidazole-4-carboxamide from 5-amino-1-(5-phospho-D-ribosyl)imidazole-4-carboxamide (10-formyl THF route): step 1/1. It participates in purine metabolism; IMP biosynthesis via de novo pathway; IMP from 5-formamido-1-(5-phospho-D-ribosyl)imidazole-4-carboxamide: step 1/1. The sequence is that of Bifunctional purine biosynthesis protein PurH from Citrifermentans bemidjiense (strain ATCC BAA-1014 / DSM 16622 / JCM 12645 / Bem) (Geobacter bemidjiensis).